The sequence spans 94 residues: MIFLLPSIISVMLLAEPVLMLGDTEDADLMEMVQLSRPFFNPIIRAVELVELREERQRDCGHLHDPCPNDRPGHRTCCIGLQCRYGKCLVRVGR.

Positions 1-22 (MIFLLPSIISVMLLAEPVLMLG) are cleaved as a signal peptide. A propeptide spanning residues 23–58 (DTEDADLMEMVQLSRPFFNPIIRAVELVELREERQR) is cleaved from the precursor. Disulfide bonds link cysteine 60–cysteine 78, cysteine 67–cysteine 83, and cysteine 77–cysteine 88. Valine 92 carries the valine amide modification.

It belongs to the neurotoxin 14 (magi-1) family. OAIP-1 subfamily. In terms of tissue distribution, expressed by the venom gland.

The protein resides in the secreted. Its function is as follows. Probable ion channel inhibitor. Shows insecticidal activity. Acts synergistically with the neonicotinoid insecticide imidacloprid. Is neither a repellent that repels insects nor an attractant that is preferentially consumed by insects. Is very stable. The polypeptide is U1-theraphotoxin-Sp1a (Selenotypus plumipes (Australian featherleg tarantula)).